The chain runs to 151 residues: Small ribosomal subunit protein uS15 (151 aa).

The residue at position 32 (serine 32) is a Phosphoserine. Glycyl lysine isopeptide (Lys-Gly) (interchain with G-Cter in ubiquitin) cross-links involve residues lysine 39 and lysine 43.

Belongs to the universal ribosomal protein uS15 family. As to quaternary structure, component of the small ribosomal subunit (SSU). Mature yeast ribosomes consist of a small (40S) and a large (60S) subunit. The 40S small subunit contains 1 molecule of ribosomal RNA (18S rRNA) and 33 different proteins (encoded by 57 genes). The large 60S subunit contains 3 rRNA molecules (25S, 5.8S and 5S rRNA) and 46 different proteins (encoded by 81 genes).

The protein resides in the cytoplasm. In terms of biological role, component of the ribosome, a large ribonucleoprotein complex responsible for the synthesis of proteins in the cell. The small ribosomal subunit (SSU) binds messenger RNAs (mRNAs) and translates the encoded message by selecting cognate aminoacyl-transfer RNA (tRNA) molecules. The large subunit (LSU) contains the ribosomal catalytic site termed the peptidyl transferase center (PTC), which catalyzes the formation of peptide bonds, thereby polymerizing the amino acids delivered by tRNAs into a polypeptide chain. The nascent polypeptides leave the ribosome through a tunnel in the LSU and interact with protein factors that function in enzymatic processing, targeting, and the membrane insertion of nascent chains at the exit of the ribosomal tunnel. The polypeptide is Small ribosomal subunit protein uS15 (Saccharomyces cerevisiae (strain ATCC 204508 / S288c) (Baker's yeast)).